The primary structure comprises 1010 residues: Sodium/potassium-transporting ATPase subunit alpha-3 (1010 aa).

Residues 1-21 (MGDKDDRFPKKKKGGTKDMDA) form a disordered region. The Cytoplasmic portion of the chain corresponds to 1–74 (MGDKDDRFPK…NALTPPPTTP (74 aa)). Residues 69–71 (PPP) are interaction with phosphoinositide-3 kinase. The helical transmembrane segment at 75 to 95 (EWVKFCRQLFGGFSILLWTGA) threads the bilayer. Over 96-118 (ILCFLAYAIQAATEDEPAGDNLY) the chain is Extracellular. A helical transmembrane segment spans residues 119–139 (LGIVLTAVVVITGCFSYFQEA). At 140–275 (KSSKIMESFK…TGKTPIAVEI (136 aa)) the chain is on the cytoplasmic side. Polar residues predominate over residues 201–216 (DNSSLTGESEPQSRSP). The tract at residues 201 to 221 (DNSSLTGESEPQSRSPDCTHD) is disordered. The chain crosses the membrane as a helical span at residues 276–295 (EHFIHIITGVAVFLGVTFFI). The Extracellular segment spans residues 296 to 307 (LAIILGYTWLKA). Residues 308 to 325 (VIFLIGIIVANVPEGLLA) form a helical membrane-spanning segment. Residues 326–759 (TVTVCLTLTA…EEGRLIFDNL (434 aa)) are Cytoplasmic-facing. Residue aspartate 363 is the 4-aspartylphosphate intermediate of the active site. Mg(2+) is bound by residues aspartate 704 and aspartate 708. The helical transmembrane segment at 760–779 (KKSIAYTLTSNIPEITPFLF) threads the bilayer. Residues 780 to 789 (FIIVNIPLAL) lie on the Extracellular side of the membrane. Residues 790-810 (GTITILCIDLGTDMGSAISLA) form a helical membrane-spanning segment. Topologically, residues 811-830 (YETAESDIMKRQPRNPCRDK) are cytoplasmic. A helical membrane pass occupies residues 831–853 (LVNERLISIAYGQIGMIQALGGF). Residues 854-905 (FSYFVILAENGFLPSQLVGIRLNWDDRSLNDLEDSYGQQWTYEQRKIVEFTC) are Extracellular-facing. Residues 906 to 925 (HTAFFVSIVVVQWADLIICK) form a helical membrane-spanning segment. Over 926 to 938 (TRRNSVFQQGMKN) the chain is Cytoplasmic. At serine 930 the chain carries Phosphoserine; by PKA. A helical transmembrane segment spans residues 939-957 (KILIFGLFEETALAAFLSY). Residues 958 to 972 (CPGMDVALRMYPLKP) lie on the Extracellular side of the membrane. The chain crosses the membrane as a helical span at residues 973–993 (TWWFWAFPYSFLIFVYDEARK). Residues 994–1010 (LILCRNPGGWVEKETYY) are Cytoplasmic-facing.

Belongs to the cation transport ATPase (P-type) (TC 3.A.3) family. Type IIC subfamily. In terms of assembly, the sodium/potassium-transporting ATPase is composed of a catalytic alpha subunit, an auxiliary non-catalytic beta subunit and an additional regulatory subunit.

It localises to the cell membrane. It carries out the reaction K(+)(out) + Na(+)(in) + ATP + H2O = K(+)(in) + Na(+)(out) + ADP + phosphate + H(+). In terms of biological role, this is the catalytic component of the active enzyme, which catalyzes the hydrolysis of ATP coupled with the exchange of sodium and potassium ions across the plasma membrane. This action creates the electrochemical gradient of sodium and potassium ions, providing the energy for active transport of various nutrients. This chain is Sodium/potassium-transporting ATPase subunit alpha-3 (atp1a3), found in Oreochromis mossambicus (Mozambique tilapia).